Reading from the N-terminus, the 572-residue chain is Myb-like protein Y (572 aa).

The segment covering 196–211 (QSQSQLPTATNNNNKQ) has biased composition (polar residues). Residues 196–283 (QSQSQLPTAT…NNNNNNNNNE (88 aa)) are disordered. 2 stretches are compositionally biased toward low complexity: residues 222–237 (TATA…TTTT) and 260–281 (NDNN…NNNN). A Myb-like domain is found at 311–360 (PWTVEDQKKLEDALTKYPPSRFSSVSRWQMVSKELGISPKAVALRYNQML). Residues 367-456 (KPSLQQQQQQ…TTVTPNMTTP (90 aa)) are disordered. Composition is skewed to low complexity over residues 371–392 (QQQQ…TTTT) and 414–425 (SSFSSPSSSSKE). Over residues 426 to 435 (SPNKKEKTTH) the composition is skewed to basic and acidic residues. The span at 436 to 455 (DTTTTTNTATTTTVTPNMTT) shows a compositional bias: low complexity.

This is Myb-like protein Y (mybY) from Dictyostelium discoideum (Social amoeba).